Here is a 142-residue protein sequence, read N- to C-terminus: Large ribosomal subunit protein uL16 (142 aa).

This sequence belongs to the universal ribosomal protein uL16 family. As to quaternary structure, part of the 50S ribosomal subunit.

Its function is as follows. Binds 23S rRNA and is also seen to make contacts with the A and possibly P site tRNAs. This Aquifex aeolicus (strain VF5) protein is Large ribosomal subunit protein uL16.